An 878-amino-acid polypeptide reads, in one-letter code: MIKAGSEIRESFLRFFEGKGHTRVSSSSLIPKDDPTLLFTNAGMVQFKNAFLGLEDRGYSRAASCQKCVRAGGKHNDLENVGFTARHHTFFEMLGNFSFGDYFKREAIAWAWEYLTEVIQLPKERLWVTVFQDDDEAYRIWLEEMRIPADRIVRLGEKSNFWMMGETGPCGPCSEIIYDQGEGTGCGRPDCHIECGCDRYLEIWNLVFTQFDRDEAGILTPLPKPNIDTGMGLERLAAVAQGVKSNYDTDLFAPLLAAISRTTGKPYGKNEEDDVSLRVIADHARSVAFLIGDGILPSNEGRGYVLRRILRRAARHGKLLGLNQPFLHELTPVVIEAMKETYPDLLDKKSYITKVILNEEQRFMETLDAGLKILQEEVSRLKKAGTTTIPGDVVFRLYDTFGFPTDLTADIVRRDNLTIDEDGFQRAMEVQREKARESWKGSGEEAISALYQKLSTQGISTVFVGHEGVCNAQSQITALLQKEELVDSLAEGEEGELIVAETPFYGEIGGQIGDTGTIEGEDFVFEVLDTRRPLDNLISHVGRVIKGRGRKGDSVNLIVAEDKRRATEANHSATHLLQAAMKTVMGNHIKQSGSLVTAERLRFDFTHFSKIEENELEQIENLANAVIRRNLPVVTRVLPLEEAMKTGATAVFDEKYGEKVRVVRMGDFSMELCGGTHIQRTGDIGFIKIIHESAIAAGVRRIEAVTGREAVNHARRVENELKKAAKLLKVSPFDLGERVEKLIKTQKDQEKEIETLKGRLAAKDSADLLSQAREIRGIRVLTAAVNAPDAKTLRDFGDKLRDRLQSGIILIGSKAEGKAMLLCLVTKDLTDRYSAGSIIREIAPVVGGKGGGRPDMAQAGGPEPENLERALKHLEEMI.

Zn(2+) is bound by residues His571, His575, Cys673, and His677.

It belongs to the class-II aminoacyl-tRNA synthetase family. It depends on Zn(2+) as a cofactor.

Its subcellular location is the cytoplasm. It carries out the reaction tRNA(Ala) + L-alanine + ATP = L-alanyl-tRNA(Ala) + AMP + diphosphate. Catalyzes the attachment of alanine to tRNA(Ala) in a two-step reaction: alanine is first activated by ATP to form Ala-AMP and then transferred to the acceptor end of tRNA(Ala). Also edits incorrectly charged Ser-tRNA(Ala) and Gly-tRNA(Ala) via its editing domain. In Syntrophus aciditrophicus (strain SB), this protein is Alanine--tRNA ligase.